The sequence spans 116 residues: Large ribosomal subunit protein uL18 (116 aa).

It belongs to the universal ribosomal protein uL18 family. In terms of assembly, part of the 50S ribosomal subunit; part of the 5S rRNA/L5/L18/L25 subcomplex. Contacts the 5S and 23S rRNAs.

Its function is as follows. This is one of the proteins that bind and probably mediate the attachment of the 5S RNA into the large ribosomal subunit, where it forms part of the central protuberance. This Novosphingobium aromaticivorans (strain ATCC 700278 / DSM 12444 / CCUG 56034 / CIP 105152 / NBRC 16084 / F199) protein is Large ribosomal subunit protein uL18.